Consider the following 346-residue polypeptide: Hydroxyproline O-galactosyltransferase HPGT3 (346 aa).

The span at 1 to 10 shows a compositional bias: polar residues; that stretch reads MESLPTTVPS. Positions 1–21 are disordered; that stretch reads MESLPTTVPSKSERRARSSKF. Residues 1-28 lie on the Cytoplasmic side of the membrane; sequence MESLPTTVPSKSERRARSSKFSQSSSKP. A helical; Signal-anchor for type II membrane protein transmembrane segment spans residues 29 to 45; it reads SVIMAFFSCVAWLYVAG. The Lumenal portion of the chain corresponds to 46–346; that stretch reads RLWQDAENRV…IRQDKVCSVA (301 aa).

It belongs to the glycosyltransferase 31 family. The cofactor is Mn(2+). Expressed in roots, rosette leaves, cauline leaves, stems, flowers and siliques.

It localises to the golgi apparatus membrane. Its pathway is protein modification; protein glycosylation. In terms of biological role, possesses hydroxyproline O-galactosyltransferase activity. Transfers galactose from UDP-galactose to hydroxyproline residues in the arabinogalactan proteins (AGPs). Is specific for AGPs containing non-contiguous peptidyl hydroxyproline residues. The addition of galactose onto the peptidyl hydroxyproline residues in AGP core proteins represents the first committed step in arabinogalactan polysaccharide addition. AGP glycans play essential roles in both vegetative and reproductive plant growth. This is Hydroxyproline O-galactosyltransferase HPGT3 from Arabidopsis thaliana (Mouse-ear cress).